Consider the following 609-residue polypeptide: Altered inheritance of mitochondria protein 9, mitochondrial (609 aa).

The transit peptide at 1 to 24 (MSIIQARCIGNLTRRSIVNVMSRR) directs the protein to the mitochondrion.

The protein belongs to the AIM9 family.

It localises to the mitochondrion. This is Altered inheritance of mitochondria protein 9, mitochondrial (AIM9) from Meyerozyma guilliermondii (strain ATCC 6260 / CBS 566 / DSM 6381 / JCM 1539 / NBRC 10279 / NRRL Y-324) (Yeast).